A 428-amino-acid chain; its full sequence is Glutamate-1-semialdehyde 2,1-aminomutase (428 aa).

Lys-265 bears the N6-(pyridoxal phosphate)lysine mark.

The protein belongs to the class-III pyridoxal-phosphate-dependent aminotransferase family. HemL subfamily. Homodimer. Requires pyridoxal 5'-phosphate as cofactor.

The protein localises to the cytoplasm. It catalyses the reaction (S)-4-amino-5-oxopentanoate = 5-aminolevulinate. It functions in the pathway porphyrin-containing compound metabolism; protoporphyrin-IX biosynthesis; 5-aminolevulinate from L-glutamyl-tRNA(Glu): step 2/2. The polypeptide is Glutamate-1-semialdehyde 2,1-aminomutase (Vesicomyosocius okutanii subsp. Calyptogena okutanii (strain HA)).